The chain runs to 206 residues: Imidazole glycerol phosphate synthase subunit HisH (206 aa).

The 202-residue stretch at 5–206 (SVVVLDYGSG…AVLRNWIERL (202 aa)) folds into the Glutamine amidotransferase type-1 domain. The active-site Nucleophile is C83. Residues H187 and E189 contribute to the active site.

In terms of assembly, heterodimer of HisH and HisF.

The protein resides in the cytoplasm. The enzyme catalyses 5-[(5-phospho-1-deoxy-D-ribulos-1-ylimino)methylamino]-1-(5-phospho-beta-D-ribosyl)imidazole-4-carboxamide + L-glutamine = D-erythro-1-(imidazol-4-yl)glycerol 3-phosphate + 5-amino-1-(5-phospho-beta-D-ribosyl)imidazole-4-carboxamide + L-glutamate + H(+). The catalysed reaction is L-glutamine + H2O = L-glutamate + NH4(+). It functions in the pathway amino-acid biosynthesis; L-histidine biosynthesis; L-histidine from 5-phospho-alpha-D-ribose 1-diphosphate: step 5/9. In terms of biological role, IGPS catalyzes the conversion of PRFAR and glutamine to IGP, AICAR and glutamate. The HisH subunit catalyzes the hydrolysis of glutamine to glutamate and ammonia as part of the synthesis of IGP and AICAR. The resulting ammonia molecule is channeled to the active site of HisF. This chain is Imidazole glycerol phosphate synthase subunit HisH, found in Mycolicibacterium paratuberculosis (strain ATCC BAA-968 / K-10) (Mycobacterium paratuberculosis).